The primary structure comprises 318 residues: Ribonuclease Z (318 aa).

Residues His63, His65, Asp67, His68, His142, Asp213, and His273 each coordinate Zn(2+). The active-site Proton acceptor is Asp67.

The protein belongs to the RNase Z family. As to quaternary structure, homodimer. Zn(2+) serves as cofactor.

The catalysed reaction is Endonucleolytic cleavage of RNA, removing extra 3' nucleotides from tRNA precursor, generating 3' termini of tRNAs. A 3'-hydroxy group is left at the tRNA terminus and a 5'-phosphoryl group is left at the trailer molecule.. Its function is as follows. Zinc phosphodiesterase, which displays some tRNA 3'-processing endonuclease activity. Probably involved in tRNA maturation, by removing a 3'-trailer from precursor tRNA. The polypeptide is Ribonuclease Z (Leuconostoc mesenteroides subsp. mesenteroides (strain ATCC 8293 / DSM 20343 / BCRC 11652 / CCM 1803 / JCM 6124 / NCDO 523 / NBRC 100496 / NCIMB 8023 / NCTC 12954 / NRRL B-1118 / 37Y)).